A 200-amino-acid polypeptide reads, in one-letter code: Probable GTP-binding protein EngB (200 aa).

In terms of domain architecture, EngB-type G spans 22–199 (GLDEIALAGR…KDWIQARLYE (178 aa)). GTP-binding positions include 30-37 (GRSNVGKS), 57-61 (GKTQT), 78-81 (DVPG), 145-148 (TKMD), and 178-180 (FSS). Positions 37 and 59 each coordinate Mg(2+).

It belongs to the TRAFAC class TrmE-Era-EngA-EngB-Septin-like GTPase superfamily. EngB GTPase family. The cofactor is Mg(2+).

Functionally, necessary for normal cell division and for the maintenance of normal septation. This is Probable GTP-binding protein EngB from Lactobacillus delbrueckii subsp. bulgaricus (strain ATCC 11842 / DSM 20081 / BCRC 10696 / JCM 1002 / NBRC 13953 / NCIMB 11778 / NCTC 12712 / WDCM 00102 / Lb 14).